Consider the following 71-residue polypeptide: Heat-stable enterotoxin B (71 aa).

The N-terminal stretch at Met-1 to Gly-19 is a signal peptide. Positions Gln-20–Ser-52 are excised as a propeptide. Cystine bridges form between Cys-59/Cys-64, Cys-60/Cys-68, and Cys-63/Cys-71.

It belongs to the heat-stable enterotoxin family.

It localises to the secreted. Toxin which activates the particulate form of guanylate cyclase and increases cyclic GMP levels within the host intestinal epithelial cells. Could play an important role in pathogenesis. This chain is Heat-stable enterotoxin B (ystB), found in Yersinia enterocolitica.